Reading from the N-terminus, the 63-residue chain is Small ribosomal subunit protein eS30 (63 aa).

The tract at residues 1–33 is disordered; the sequence is MGKVHGSLARAGKVKSQTPKVEKQEKPKKPQGR.

Belongs to the eukaryotic ribosomal protein eS30 family. As to quaternary structure, component of the small ribosomal subunit. Mature ribosomes consist of a small (40S) and a large (60S) subunit. The 40S subunit contains about 32 different proteins and 1 molecule of RNA (18S). The 60S subunit contains 45 different proteins and 3 molecules of RNA (25S, 5.8S and 5S).

It is found in the cytoplasm. Functionally, component of the ribosome, a large ribonucleoprotein complex responsible for the synthesis of proteins in the cell. The small ribosomal subunit (SSU) binds messenger RNAs (mRNAs) and translates the encoded message by selecting cognate aminoacyl-transfer RNA (tRNA) molecules. The large subunit (LSU) contains the ribosomal catalytic site termed the peptidyl transferase center (PTC), which catalyzes the formation of peptide bonds, thereby polymerizing the amino acids delivered by tRNAs into a polypeptide chain. The nascent polypeptides leave the ribosome through a tunnel in the LSU and interact with protein factors that function in enzymatic processing, targeting, and the membrane insertion of nascent chains at the exit of the ribosomal tunnel. This chain is Small ribosomal subunit protein eS30 (RPS30), found in Candida albicans (strain SC5314 / ATCC MYA-2876) (Yeast).